Reading from the N-terminus, the 420-residue chain is ATP-dependent Clp protease ATP-binding subunit ClpX (420 aa).

In terms of domain architecture, ClpX-type ZB spans Lys-4–His-57. Residues Cys-16, Cys-19, Cys-38, and Cys-41 each coordinate Zn(2+). Residue Pro-122–Leu-129 participates in ATP binding.

Belongs to the ClpX chaperone family. Component of the ClpX-ClpP complex. Forms a hexameric ring that, in the presence of ATP, binds to fourteen ClpP subunits assembled into a disk-like structure with a central cavity, resembling the structure of eukaryotic proteasomes.

ATP-dependent specificity component of the Clp protease. It directs the protease to specific substrates. Can perform chaperone functions in the absence of ClpP. This Leptospira interrogans serogroup Icterohaemorrhagiae serovar copenhageni (strain Fiocruz L1-130) protein is ATP-dependent Clp protease ATP-binding subunit ClpX.